The following is a 548-amino-acid chain: MFS-rype transporter paaT (548 aa).

A compositionally biased stretch (basic and acidic residues) spans 1-10 (MEAPRSDQAH). Residues 1–32 (MEAPRSDQAHTDATTPMEAIRTTSLGTNNYGP) are disordered. Positions 21 to 30 (RTTSLGTNNY) are enriched in polar residues. N-linked (GlcNAc...) asparagine glycosylation is found at Asn70 and Asn93. The next 12 helical transmembrane spans lie at 100–120 (WYCT…SSVI), 139–159 (LVVI…FAPM), 174–194 (ALAV…TLIV), 197–217 (LIDG…LADL), 224–244 (GVPM…GPLV), 256–276 (WLYW…TFTV), 332–352 (IVLF…MFFV), 370–390 (GLMF…APFV), 411–431 (LIPM…FAWT), 436–456 (LHWM…ILLY), 471–493 (AASA…VLFT), and 505–525 (ASTL…VFYF). Positions 258–269 (YWIQLILAFVAW) match the Peroxisomal targeting signal motif.

Belongs to the major facilitator superfamily. DHA1 family. Polyamines/proton antiporter (TC 2.A.1.2.16) subfamily.

The protein localises to the peroxisome membrane. Its function is as follows. MFS-type transporter involved in penicillin production, most likely through the translocation of side-chain precursors (phenylacetic acid and phenoxyacetic acid) from the cytosol to the peroxisomal lumen across the peroxisomal membrane. This is MFS-rype transporter paaT from Penicillium rubens (strain ATCC 28089 / DSM 1075 / NRRL 1951 / Wisconsin 54-1255) (Penicillium chrysogenum).